Consider the following 407-residue polypeptide: Tyrosine--tRNA ligase (407 aa).

Y35 contacts L-tyrosine. The 'HIGH' region signature appears at 40-49 (PTADSLHVGH). L-tyrosine-binding residues include Y168 and Q172. A 'KMSKS' region motif is present at residues 228–232 (KMGKT). K231 provides a ligand contact to ATP. The S4 RNA-binding domain maps to 341–405 (NLLVDLLVKC…RGKKNFNRIV (65 aa)).

It belongs to the class-I aminoacyl-tRNA synthetase family. TyrS type 1 subfamily. As to quaternary structure, homodimer.

It is found in the cytoplasm. The catalysed reaction is tRNA(Tyr) + L-tyrosine + ATP = L-tyrosyl-tRNA(Tyr) + AMP + diphosphate + H(+). Functionally, catalyzes the attachment of tyrosine to tRNA(Tyr) in a two-step reaction: tyrosine is first activated by ATP to form Tyr-AMP and then transferred to the acceptor end of tRNA(Tyr). This chain is Tyrosine--tRNA ligase, found in Clostridium botulinum (strain ATCC 19397 / Type A).